Consider the following 348-residue polypeptide: GTPase Obg (348 aa).

An Obg domain is found at 1–159 (MKFVDEVKVH…RELVLELKLM (159 aa)). The 172-residue stretch at 160–331 (ADVGLVGLPN…LLSALVRILS (172 aa)) folds into the OBG-type G domain. Residues 166–173 (GLPNAGKS), 191–195 (FTTLI), 213–216 (DIPG), 283–286 (NKVD), and 312–314 (SAR) contribute to the GTP site. S173 and T193 together coordinate Mg(2+).

It belongs to the TRAFAC class OBG-HflX-like GTPase superfamily. OBG GTPase family. In terms of assembly, monomer. Mg(2+) serves as cofactor.

Its subcellular location is the cytoplasm. An essential GTPase which binds GTP, GDP and possibly (p)ppGpp with moderate affinity, with high nucleotide exchange rates and a fairly low GTP hydrolysis rate. Plays a role in control of the cell cycle, stress response, ribosome biogenesis and in those bacteria that undergo differentiation, in morphogenesis control. This chain is GTPase Obg, found in Syntrophobacter fumaroxidans (strain DSM 10017 / MPOB).